Here is a 243-residue protein sequence, read N- to C-terminus: UPF0758 protein AM1_4368 (243 aa).

An MPN domain is found at 113 to 235; sequence VIDDPAVAAA…FTSLRQTTSL (123 aa). Zn(2+)-binding residues include His184, His186, and Asp197. Residues 184–197 carry the JAMM motif motif; that stretch reads HNHPSGQTDPSPED.

The protein belongs to the UPF0758 family.

The chain is UPF0758 protein AM1_4368 from Acaryochloris marina (strain MBIC 11017).